The following is a 334-amino-acid chain: L-lactate dehydrogenase B-B chain (334 aa).

Residues 30–58 (GQVG…VEDK) and arginine 100 contribute to the NAD(+) site. 3 residues coordinate substrate: arginine 107, asparagine 139, and arginine 170. Asparagine 139 is a binding site for NAD(+). The active-site Proton acceptor is the histidine 194. Threonine 249 contacts substrate.

The protein belongs to the LDH/MDH superfamily. LDH family. In terms of assembly, homotetramer.

It is found in the cytoplasm. The catalysed reaction is (S)-lactate + NAD(+) = pyruvate + NADH + H(+). The protein operates within fermentation; pyruvate fermentation to lactate; (S)-lactate from pyruvate: step 1/1. The protein is L-lactate dehydrogenase B-B chain of Danio rerio (Zebrafish).